The primary structure comprises 215 residues: MRDELVWIDCEMTGLDLGSDKLIEIAALVTDAELNVLGDGVDVVIHADDAALAAMGEVVTEMHSRSGLIDEVKASTVDLATAEEMVLDYIRTHVKAPKTAPLAGNSIATDRAFIVRDMPALDSYLHYRMIDVSSIKELCRRWYPRIYFGQPVKGLTHRALADIHESIRELQFYRRTAFVAPPGPSTSEIEAVAAALDEGKDAPGPSDSASAPPTG.

The Exonuclease domain maps to 5–170 (LVWIDCEMTG…ADIHESIREL (166 aa)). Tyr127 is a catalytic residue. Residues 196 to 215 (LDEGKDAPGPSDSASAPPTG) are disordered. The segment covering 202–215 (APGPSDSASAPPTG) has biased composition (low complexity).

Belongs to the oligoribonuclease family.

The protein resides in the cytoplasm. Its function is as follows. 3'-to-5' exoribonuclease specific for small oligoribonucleotides. This Mycobacterium avium (strain 104) protein is Oligoribonuclease.